The following is a 319-amino-acid chain: Type II methyltransferase M.RsrI (319 aa).

The span at 1–10 (MANRSHHNAG) shows a compositional bias: basic residues. The segment at 1–32 (MANRSHHNAGHRAMNALRKSGQKHSSESQLGS) is disordered.

The protein belongs to the N(4)/N(6)-methyltransferase family.

The catalysed reaction is a 2'-deoxyadenosine in DNA + S-adenosyl-L-methionine = an N(6)-methyl-2'-deoxyadenosine in DNA + S-adenosyl-L-homocysteine + H(+). Its activity is regulated as follows. Strongly inhibited by N-ethylmaleimide, inactivated by MgCl(2) or MgSO(4). Its function is as follows. A beta subtype methylase, recognizes the double-stranded sequence 5'-GAATTC-3', methylates A-3 on both strands, and protects the DNA from cleavage by the RsrI endonuclease. The chain is Type II methyltransferase M.RsrI from Cereibacter sphaeroides (Rhodobacter sphaeroides).